The chain runs to 279 residues: Pantothenate synthetase (279 aa).

An ATP-binding site is contributed by 27-34; sequence MGYLHEGH. The active-site Proton donor is histidine 34. Glutamine 58 is a binding site for (R)-pantoate. Glutamine 58 contacts beta-alanine. 144–147 is an ATP binding site; sequence GKKD. Residue glutamine 150 coordinates (R)-pantoate. ATP contacts are provided by residues valine 173 and 181 to 184; that span reads MSSR.

It belongs to the pantothenate synthetase family. Homodimer.

The protein localises to the cytoplasm. The enzyme catalyses (R)-pantoate + beta-alanine + ATP = (R)-pantothenate + AMP + diphosphate + H(+). Its pathway is cofactor biosynthesis; (R)-pantothenate biosynthesis; (R)-pantothenate from (R)-pantoate and beta-alanine: step 1/1. Functionally, catalyzes the condensation of pantoate with beta-alanine in an ATP-dependent reaction via a pantoyl-adenylate intermediate. In Citrifermentans bemidjiense (strain ATCC BAA-1014 / DSM 16622 / JCM 12645 / Bem) (Geobacter bemidjiensis), this protein is Pantothenate synthetase.